The sequence spans 203 residues: MELDQDKKKETPEETENVNEVQLEKQNQDEETEAEAEEADKAILERSDSVKTECPPQAEKQNQDEETEAEAEEADKAILERSDSVKTECPPQAEKQIQEEKCETQEADRSEGTELGKLHSQLDQLPDNVMLAGVKIQAWWRGTLVRRTLLLAALNAWTIQCWWREAKARLQGRKLHEVMRYRLRNLNLKSISKRKQPNQSSFL.

Residues 1–12 are compositionally biased toward basic and acidic residues; that stretch reads MELDQDKKKETP. The segment at 1–111 is disordered; that stretch reads MELDQDKKKE…CETQEADRSE (111 aa). A coiled-coil region spans residues 13–82; it reads EETENVNEVQ…EADKAILERS (70 aa). The segment covering 29-38 has biased composition (acidic residues); sequence DEETEAEAEE. The segment covering 39 to 51 has biased composition (basic and acidic residues); that stretch reads ADKAILERSDSVK. Acidic residues predominate over residues 64–73; that stretch reads DEETEAEAEE. Basic and acidic residues-rich tracts occupy residues 74–86 and 96–111; these read ADKA…DSVK and QIQE…DRSE. Residues 129–158 enclose the IQ domain; it reads VMLAGVKIQAWWRGTLVRRTLLLAALNAWT.

The chain is IQ domain-containing protein F3 (Iqcf3) from Mus musculus (Mouse).